We begin with the raw amino-acid sequence, 196 residues long: Putative NADH dehydrogenase/NAD(P)H nitroreductase XOO4023 (196 aa).

Belongs to the nitroreductase family. HadB/RutE subfamily. Requires FMN as cofactor.

The protein is Putative NADH dehydrogenase/NAD(P)H nitroreductase XOO4023 of Xanthomonas oryzae pv. oryzae (strain MAFF 311018).